We begin with the raw amino-acid sequence, 158 residues long: Endoribonuclease YbeY (158 aa).

The Zn(2+) site is built by histidine 118, histidine 122, and histidine 128.

It belongs to the endoribonuclease YbeY family. It depends on Zn(2+) as a cofactor.

It is found in the cytoplasm. In terms of biological role, single strand-specific metallo-endoribonuclease involved in late-stage 70S ribosome quality control and in maturation of the 3' terminus of the 16S rRNA. In Haemophilus ducreyi (strain 35000HP / ATCC 700724), this protein is Endoribonuclease YbeY.